A 142-amino-acid chain; its full sequence is Small ribosomal subunit protein uS12 (142 aa).

The protein belongs to the universal ribosomal protein uS12 family. In terms of assembly, part of the 30S ribosomal subunit.

In terms of biological role, with S4 and S5 plays an important role in translational accuracy. Located at the interface of the 30S and 50S subunits. The chain is Small ribosomal subunit protein uS12 from Methanosarcina mazei (strain ATCC BAA-159 / DSM 3647 / Goe1 / Go1 / JCM 11833 / OCM 88) (Methanosarcina frisia).